A 475-amino-acid chain; its full sequence is 3-isopropylmalate dehydratase large subunit (475 aa).

[4Fe-4S] cluster is bound by residues cysteine 353, cysteine 414, and cysteine 417.

Belongs to the aconitase/IPM isomerase family. LeuC type 1 subfamily. Heterodimer of LeuC and LeuD. It depends on [4Fe-4S] cluster as a cofactor.

The enzyme catalyses (2R,3S)-3-isopropylmalate = (2S)-2-isopropylmalate. It functions in the pathway amino-acid biosynthesis; L-leucine biosynthesis; L-leucine from 3-methyl-2-oxobutanoate: step 2/4. Catalyzes the isomerization between 2-isopropylmalate and 3-isopropylmalate, via the formation of 2-isopropylmaleate. This Ectopseudomonas mendocina (strain ymp) (Pseudomonas mendocina) protein is 3-isopropylmalate dehydratase large subunit.